A 217-amino-acid chain; its full sequence is MSKSKMIVRTKFIDRACHWTVVICFFLVALSGISFFFPTLQWLTQTFGTPQMGRILHPFFGIAIFVALMFMFVRFVHHNIPDKKDIPWLLNIVEVLKGNEHKVADVGKYNAGQKMMFWSIMSMIFVLLVTGVIIWRPYFAQYFPMQVVRYSLLIHAAAGIILIHAILIHMYMAFWVKGSIKGMIEGKVSRRWAKKHHPRWYREIEKAEAKKESEEGI.

Residues 1-11 are Cytoplasmic-facing; it reads MSKSKMIVRTK. The chain crosses the membrane as a helical span at residues 12 to 36; that stretch reads FIDRACHWTVVICFFLVALSGISFF. Residue His18 coordinates heme b. Topologically, residues 37-52 are periplasmic; it reads FPTLQWLTQTFGTPQM. A helical transmembrane segment spans residues 53–74; it reads GRILHPFFGIAIFVALMFMFVR. Heme b is bound at residue His57. Over 75–110 the chain is Cytoplasmic; sequence FVHHNIPDKKDIPWLLNIVEVLKGNEHKVADVGKYN. Residues 111–134 traverse the membrane as a helical segment; sequence AGQKMMFWSIMSMIFVLLVTGVII. Topologically, residues 135-150 are periplasmic; sequence WRPYFAQYFPMQVVRY. Residues 151 to 175 form a helical membrane-spanning segment; that stretch reads SLLIHAAAGIILIHAILIHMYMAFW. The heme b site is built by His155 and His169. His169 is an a menaquinone binding site. Topologically, residues 176-217 are cytoplasmic; sequence VKGSIKGMIEGKVSRRWAKKHHPRWYREIEKAEAKKESEEGI.

Belongs to the formate dehydrogenase gamma subunit family. Trimer of heterotrimers, consisting of subunits alpha, beta and gamma. Heme is required as a cofactor.

It is found in the cell inner membrane. Functionally, formate dehydrogenase allows the bacterium to use formate as major electron donor during anaerobic respiration, when nitrate is used as electron acceptor. Subunit gamma is the cytochrome b556 component of the formate dehydrogenase-N, and also contains a menaquinone reduction site that receives electrons from the beta subunit (FdnH), through its hemes. Formate dehydrogenase-N is part of a system that generates proton motive force, together with the dissimilatory nitrate reductase (Nar). In Escherichia coli O157:H7, this protein is Formate dehydrogenase, nitrate-inducible, cytochrome b556(Fdn) subunit (fdnI).